The chain runs to 181 residues: Large ribosomal subunit protein eL18 (181 aa).

The tract at residues 152-181 (WGKAPGQRGSHSAPYVRSEGRKFERAHGLK) is disordered. The segment covering 169-181 (SEGRKFERAHGLK) has biased composition (basic and acidic residues).

The protein belongs to the eukaryotic ribosomal protein eL18 family.

The protein localises to the cytoplasm. This Tetrahymena thermophila protein is Large ribosomal subunit protein eL18 (RPL18).